A 159-amino-acid polypeptide reads, in one-letter code: SsrA-binding protein (159 aa).

A disordered region spans residues 132-159 (KDFDKRHTEKERDSDREIQRAMRHGKDD).

Belongs to the SmpB family.

It localises to the cytoplasm. Required for rescue of stalled ribosomes mediated by trans-translation. Binds to transfer-messenger RNA (tmRNA), required for stable association of tmRNA with ribosomes. tmRNA and SmpB together mimic tRNA shape, replacing the anticodon stem-loop with SmpB. tmRNA is encoded by the ssrA gene; the 2 termini fold to resemble tRNA(Ala) and it encodes a 'tag peptide', a short internal open reading frame. During trans-translation Ala-aminoacylated tmRNA acts like a tRNA, entering the A-site of stalled ribosomes, displacing the stalled mRNA. The ribosome then switches to translate the ORF on the tmRNA; the nascent peptide is terminated with the 'tag peptide' encoded by the tmRNA and targeted for degradation. The ribosome is freed to recommence translation, which seems to be the essential function of trans-translation. This Pseudomonas aeruginosa (strain LESB58) protein is SsrA-binding protein.